The sequence spans 937 residues: Protein translocase subunit SecA (937 aa).

ATP is bound by residues Gln90, 108 to 112, and Asp509; that span reads GEGKT.

This sequence belongs to the SecA family. In terms of assembly, monomer and homodimer. Part of the essential Sec protein translocation apparatus which comprises SecA, SecYEG and auxiliary proteins SecDF. Other proteins may also be involved.

Its subcellular location is the cell inner membrane. The protein resides in the cellular thylakoid membrane. It localises to the cytoplasm. It catalyses the reaction ATP + H2O + cellular proteinSide 1 = ADP + phosphate + cellular proteinSide 2.. Functionally, part of the Sec protein translocase complex. Interacts with the SecYEG preprotein conducting channel. Has a central role in coupling the hydrolysis of ATP to the transfer of proteins into and across the cell membrane, serving as an ATP-driven molecular motor driving the stepwise translocation of polypeptide chains across the membrane. Probably participates in protein translocation into and across both the cytoplasmic and thylakoid membranes in cyanobacterial cells. The chain is Protein translocase subunit SecA from Synechococcus sp. (strain CC9902).